The primary structure comprises 220 residues: Large ribosomal subunit protein uL3 (220 aa).

Residues 145–169 (GPASHGSKFHRRPGSSGNRTWPGRV) are disordered.

The protein belongs to the universal ribosomal protein uL3 family. In terms of assembly, part of the 50S ribosomal subunit. Forms a cluster with proteins L14 and L19.

Its function is as follows. One of the primary rRNA binding proteins, it binds directly near the 3'-end of the 23S rRNA, where it nucleates assembly of the 50S subunit. The protein is Large ribosomal subunit protein uL3 of Bdellovibrio bacteriovorus (strain ATCC 15356 / DSM 50701 / NCIMB 9529 / HD100).